Consider the following 268-residue polypeptide: Type III pantothenate kinase (268 aa).

6-13 (DVGNTNIV) provides a ligand contact to ATP. Residues Tyr-100 and 107–110 (GADR) contribute to the substrate site. The Proton acceptor role is filled by Asp-109. Asp-129 is a binding site for K(+). Thr-132 is a binding site for ATP. Thr-184 is a substrate binding site.

This sequence belongs to the type III pantothenate kinase family. As to quaternary structure, homodimer. The cofactor is NH4(+). Requires K(+) as cofactor.

The protein resides in the cytoplasm. The catalysed reaction is (R)-pantothenate + ATP = (R)-4'-phosphopantothenate + ADP + H(+). It participates in cofactor biosynthesis; coenzyme A biosynthesis; CoA from (R)-pantothenate: step 1/5. In terms of biological role, catalyzes the phosphorylation of pantothenate (Pan), the first step in CoA biosynthesis. This Alkaliphilus metalliredigens (strain QYMF) protein is Type III pantothenate kinase.